Consider the following 172-residue polypeptide: DNA-directed RNA polymerase II subunit RPB7 (172 aa).

It belongs to the eukaryotic RPB7/RPC8 RNA polymerase subunit family. Component of the RNA polymerase II (Pol II) core complex consisting of 12 subunits: a ten-subunit catalytic core composed of POLR2A/RPB1, POLR2B/RPB2, POLR2C/RPB3, POLR2I/RPB9, POLR2J/RPB11, POLR2E/RPABC1, POLR2F/RPABC2, POLR2H/RPABC3, POLR2K/RPABC4 and POLR2L/RPABC5 and a mobile stalk composed of two subunits POLR2D/RPB4 and POLR2G/RPB7, protruding from the core and functioning primarily in transcription initiation. Part of Pol II(G) complex, in which Pol II core associates with an additional subunit POLR2M; unlike conventional Pol II, Pol II(G) functions as a transcriptional repressor. Part of TBP-based Pol II pre-initiation complex (PIC), in which Pol II core assembles with general transcription factors and other specific initiation factors including GTF2E1, GTF2E2, GTF2F1, GTF2F2, TCEA1, ERCC2, ERCC3, GTF2H2, GTF2H3, GTF2H4, GTF2H5, GTF2A1, GTF2A2, GTF2B and TBP; this large multi-subunit PIC complex mediates DNA unwinding and targets Pol II core to the transcription start site where the first phosphodiester bond forms.

Its subcellular location is the nucleus. In terms of biological role, core component of RNA polymerase II (Pol II), a DNA-dependent RNA polymerase which synthesizes mRNA precursors and many functional non-coding RNAs using the four ribonucleoside triphosphates as substrates. Pol II is the central component of the basal RNA polymerase II transcription machinery. It is composed of mobile elements that move relative to each other. POLR2G/RPB7 is part of a subcomplex with POLR2D/RPB4 that binds to a pocket formed by POLR2A/RPB1, POLR2B/RPB2 and POLR2F/RPABC2 at the base of the clamp element. The POLR2D/RPB4-POLR2G/RPB7 subcomplex seems to lock the clamp via POLR2G/RPB7 in the closed conformation thus preventing double-stranded DNA to enter the active site cleft. The POLR2D/RPB4-POLR2G/RPB7 subcomplex binds single-stranded DNA and RNA. The chain is DNA-directed RNA polymerase II subunit RPB7 (POLR2G) from Bos taurus (Bovine).